Reading from the N-terminus, the 324-residue chain is Antihemorrhagic factor jMSF (324 aa).

The signal sequence occupies residues 1-19 (MHFLVALVLLGQIIGSTLS). Cystatin fetuin-A-type domains follow at residues 22 to 130 (VRGD…VKCH) and 141 to 254 (RNCP…SDCV). The Cell attachment site signature appears at 23-25 (RGD). Intrachain disulfides connect Cys-28–Cys-315, Cys-85–Cys-96, Cys-110–Cys-129, Cys-143–Cys-146, Cys-205–Cys-217, Cys-230–Cys-253, and Cys-287–Cys-291. Asn-204 carries an N-linked (GlcNAc...) asparagine glycan. N-linked (GlcNAc...) asparagine glycosylation occurs at Asn-282.

As to quaternary structure, homodimer. As to expression, expressed by the liver.

Its subcellular location is the secreted. In terms of biological role, suppress hemorrhage induced by metalloproteinases from the same venom (brevilysin-H3, -H4, -H6) and from habu venom (weak inhibition of the metalloproteinases HR2A). The non-hemorrhagic brevilysin-H2 is strongly inhibited by jMSF, whereas the brevilysin-L6 is not inhibited. Does not inhibit serine and cysteine proteases such as trypsin, chymotrypsin, thermolysin, and papain. The inhibition may occur by formation of a non-covalent complex between this protein and the proteinases at their metalloproteinase domains. This chain is Antihemorrhagic factor jMSF, found in Gloydius blomhoffii (Mamushi).